The primary structure comprises 277 residues: Raffinose operon transcriptional regulatory protein RafR (277 aa).

Residues Asn176–Ser274 form the HTH araC/xylS-type domain. 2 DNA-binding regions (H-T-H motif) span residues Met193 to Ala214 and Val241 to Ser264.

In terms of biological role, involved in the regulation of the raffinose-operon. This is Raffinose operon transcriptional regulatory protein RafR (rafR) from Pediococcus pentosaceus.